The chain runs to 584 residues: DNA ligase (584 aa).

Residue Glu-249 participates in ATP binding. Lys-251 serves as the catalytic N6-AMP-lysine intermediate. 6 residues coordinate ATP: Arg-256, Arg-271, Glu-301, Phe-341, Arg-416, and Lys-422.

It belongs to the ATP-dependent DNA ligase family. Mg(2+) serves as cofactor.

The enzyme catalyses ATP + (deoxyribonucleotide)n-3'-hydroxyl + 5'-phospho-(deoxyribonucleotide)m = (deoxyribonucleotide)n+m + AMP + diphosphate.. Functionally, DNA ligase that seals nicks in double-stranded DNA during DNA replication, DNA recombination and DNA repair. In Pyrobaculum islandicum (strain DSM 4184 / JCM 9189 / GEO3), this protein is DNA ligase.